The sequence spans 447 residues: Rab GDP dissociation inhibitor alpha (447 aa).

The protein belongs to the Rab GDI family. As to quaternary structure, interacts with RHOH. Interacts with the non-phosphorylated forms of RAB1A, RAB3A, RAB5A, RAB5B, RAB5C, RAB8A, RAB8B, RAB10, RAB12, RAB35, and RAB43.

It localises to the cytoplasm. The protein localises to the golgi apparatus. It is found in the trans-Golgi network. Regulates the GDP/GTP exchange reaction of most Rab proteins by inhibiting the dissociation of GDP from them, and the subsequent binding of GTP to them. Promotes the dissociation of GDP-bound Rab proteins from the membrane and inhibits their activation. Promotes the dissociation of RAB1A, RAB3A, RAB5A and RAB10 from membranes. The polypeptide is Rab GDP dissociation inhibitor alpha (GDI1) (Pongo pygmaeus (Bornean orangutan)).